Here is a 421-residue protein sequence, read N- to C-terminus: Fumarylacetoacetase (421 aa).

Aspartate 131 lines the Ca(2+) pocket. The active-site Proton acceptor is the histidine 138. Arginine 147 contacts substrate. 3 residues coordinate Ca(2+): glutamate 204, glutamate 206, and aspartate 238. A Mg(2+)-binding site is contributed by aspartate 238. Substrate-binding residues include glutamine 245 and tyrosine 249. Lysine 258 and threonine 262 together coordinate Mg(2+). Threonine 355 is a binding site for substrate.

Belongs to the FAH family. It depends on Ca(2+) as a cofactor. The cofactor is Mg(2+).

It carries out the reaction 4-fumarylacetoacetate + H2O = acetoacetate + fumarate + H(+). The protein operates within amino-acid degradation; L-phenylalanine degradation; acetoacetate and fumarate from L-phenylalanine: step 6/6. Functionally, converts fumarylacetoacetate to acetoacetate and fumarate. Involved in tyrosine catabolic pathway. Catalyzes the final step in the tyrosine degradation pathway. The polypeptide is Fumarylacetoacetase (Arabidopsis thaliana (Mouse-ear cress)).